The chain runs to 321 residues: Methionine import ATP-binding protein MetN (321 aa).

Residues 2 to 237 (ISIKNVNKYY…NTKGLRKLIG (236 aa)) form the ABC transporter domain. An ATP-binding site is contributed by 34-41 (GHSGAGKS).

It belongs to the ABC transporter superfamily. Methionine importer (TC 3.A.1.24) family. In terms of assembly, the complex is composed of two ATP-binding proteins (MetN), two transmembrane proteins (MetI) and a solute-binding protein (MetQ).

It localises to the cell membrane. The enzyme catalyses L-methionine(out) + ATP + H2O = L-methionine(in) + ADP + phosphate + H(+). It catalyses the reaction D-methionine(out) + ATP + H2O = D-methionine(in) + ADP + phosphate + H(+). Functionally, part of the ABC transporter complex MetNIQ involved in methionine import. Responsible for energy coupling to the transport system. This is Methionine import ATP-binding protein MetN from Clostridioides difficile (strain 630) (Peptoclostridium difficile).